The primary structure comprises 394 residues: Guanine nucleotide-binding protein G(s) subunit alpha isoforms short (394 aa).

The interval 1-23 (MGCLGNSKTEDQRNEEKAQREAN) is disordered. Residue Gly2 is the site of N-palmitoyl glycine attachment. Cys3 carries S-palmitoyl cysteine lipidation. Over residues 8–23 (KTEDQRNEEKAQREAN) the composition is skewed to basic and acidic residues. In terms of domain architecture, G-alpha spans 39–394 (ATHRLLLLGA…RMHLRQYELL (356 aa)). The segment at 42 to 55 (RLLLLGAGESGKST) is G1 motif. Residue 47–55 (GAGESGKST) coordinates GTP. Ser54 contributes to the Mg(2+) binding site. The interval 68 to 91 (FNGEGGEEDPQAARSNSDGEKATK) is disordered. Residues 196 to 204 (DLLRCRVLT) are G2 motif. GTP is bound by residues 197–204 (LLRCRVLT), 223–227 (DVGGQ), and 292–295 (NKQD). Thr204 serves as a coordination point for Mg(2+). The tract at residues 219–228 (FHMFDVGGQR) is G3 motif. The segment at 288–295 (ILFLNKQD) is G4 motif. Lys300 is covalently cross-linked (Glycyl lysine isopeptide (Lys-Gly) (interchain with G-Cter in ubiquitin)). Phosphoserine is present on Ser352. Positions 364–369 (TCAVDT) are G5 motif. Ala366 lines the GTP pocket.

Belongs to the G-alpha family. G(s) subfamily. As to quaternary structure, heterotrimeric G proteins are composed of 3 units; alpha, beta and gamma. The alpha chain contains the guanine nucleotide binding site. Component of the TAS2R14-GNAS2 complex, consisting of TAS2R14, GNAS2, GNB1 and GNG2; within the complex interacts with TAS2R14; this complex plays a role in the perception of bitterness. Interacts with CRY1; the interaction may block GPCR-mediated regulation of cAMP concentrations. Interacts with ADCY6 and stimulates its adenylyl cyclase activity. Interacts with ADCY2 and ADCY5. Stimulates the ADCY5 adenylyl cyclase activity. Interacts (GDP-bound form) with RIC8B; promoting GNAS folding and association with the plasma membrane. Interaction with SASH1. Interacts with GASL2L2.

It localises to the cell membrane. It catalyses the reaction GTP + H2O = GDP + phosphate + H(+). Guanine nucleotide-binding proteins (G proteins) function as transducers in numerous signaling pathways controlled by G protein-coupled receptors (GPCRs). The alpha chain contains the guanine nucleotide binding site and alternates between an active, GTP-bound state and an inactive, GDP-bound state. Signaling by an activated GPCR promotes GDP release and GTP binding. The alpha subunit has a low GTPase activity that converts bound GTP to GDP, thereby terminating the signal. Both GDP release and GTP hydrolysis are modulated by numerous regulatory proteins. Signaling involves the activation of adenylyl cyclases, resulting in increased levels of the signaling molecule cAMP. Functions downstream of beta-adrenergic receptors. Stimulates the Ras signaling pathway via RAPGEF2. The chain is Guanine nucleotide-binding protein G(s) subunit alpha isoforms short (GNAS) from Bos taurus (Bovine).